The chain runs to 294 residues: Nucleophosmin (294 aa).

Residues 121-133 (LEEEPESEDEEED) are compositionally biased toward acidic residues. Residues 121-244 (LEEEPESEDE…PKTPKVPLSL (124 aa)) form a disordered region. The Nuclear localization signal motif lies at 153–158 (PQKKPK). Acidic residues predominate over residues 161 to 186 (EDDEDDDEDEDDDEDDEDDLDDDEEE). The Nuclear localization signal motif lies at 190 to 196 (PMKKPAR). The segment covering 223–233 (KTPDSKKDKSL) has biased composition (basic and acidic residues).

This sequence belongs to the nucleoplasmin family. Decamer formed by two pentameric rings associated in a head-to-head fashion. Post-translationally, phosphorylated.

Its subcellular location is the cytoplasm. The protein localises to the nucleus. It is found in the nucleoplasm. It localises to the nucleolus. Acts as a chaperonin for the core histones H3, H2B and H4. Associated with nucleolar ribonucleoprotein structures and bind single-stranded nucleic acids. It may function in the assembly and/or transport of ribosome. May stimulate endonuclease activity on apurinic/apyrimidinic (AP) double-stranded DNA. May inhibit endonuclease activity on AP single-stranded RNA. The chain is Nucleophosmin (NPM1) from Gallus gallus (Chicken).